A 261-amino-acid polypeptide reads, in one-letter code: uncharacterized protein (261 aa).

The signal sequence occupies residues 1-22 (MKYYGKCISYISILILTFFIGG). A lipid anchor (N-palmitoyl cysteine) is attached at Cys23. A lipid anchor (S-diacylglycerol cysteine) is attached at Cys23.

This sequence belongs to the staphylococcal tandem lipoprotein family.

It is found in the cell membrane. This is an uncharacterized protein from Staphylococcus epidermidis (strain ATCC 12228 / FDA PCI 1200).